The sequence spans 190 residues: MNFLLSWVHWSLALLLYLHHAKWSQAAPMAEGDQKPHEVVKFMDVYQRSYCRPIETLVDIFQEYPDEIEYIFKPSCVPLMRCGGCCNDEGLECVPTEEFNITMQIMRIKPHQGQHIGEMSFLQHNKCECRPKKDRARQENPCGPCSERRKHLFVQDPQTCKCSCKNTDSRCKARQLELNERTCRCDKPRR.

Residues 1–26 (MNFLLSWVHWSLALLLYLHHAKWSQA) form the signal peptide. Disulfide bonds link cysteine 51-cysteine 93, cysteine 82-cysteine 127, and cysteine 86-cysteine 129. N-linked (GlcNAc...) asparagine glycosylation is present at asparagine 100.

The protein belongs to the PDGF/VEGF growth factor family. Homodimer; disulfide-linked. Also found as heterodimer with PGF. Interacts with NRP1. Interacts with BSG. Interacts with CD82; this interaction inhibits VEGFA-mediated signaling pathway.

It localises to the secreted. Growth factor active in angiogenesis, vasculogenesis and endothelial cell growth. Induces endothelial cell proliferation, promotes cell migration, inhibits apoptosis and induces permeabilization of blood vessels. Binds to the FLT1/VEGFR1 and KDR/VEGFR2 receptors, heparan sulfate and heparin. Binding to NRP1 receptor initiates a signaling pathway needed for motor neuron axon guidance and cell body migration, including for the caudal migration of facial motor neurons from rhombomere 4 to rhombomere 6 during embryonic development. Also binds the DEAR/FBXW7-AS1 receptor. In Sus scrofa (Pig), this protein is Vascular endothelial growth factor A (VEGFA).